The chain runs to 199 residues: DNA repair RAD52-like protein 2, chloroplastic (199 aa).

Residues M1–C40 constitute a chloroplast transit peptide. The residue at position 41 (S41) is an N-acetylserine.

Belongs to the RAD52 family. Expressed in roots and shoots. Expressed at low levels in cauline leaves, flower buds, flowers and siliques.

It localises to the plastid. The protein resides in the chloroplast. Its function is as follows. Involved in double-stranded DNA break repair. This chain is DNA repair RAD52-like protein 2, chloroplastic, found in Arabidopsis thaliana (Mouse-ear cress).